The chain runs to 299 residues: Ribonuclease H2 subunit A (299 aa).

An N-acetylmethionine modification is found at M1. Residues 28-251 (PCVLGVDEAG…AQSILESEAE (224 aa)) form the RNase H type-2 domain. A divalent metal cation is bound by residues D34, E35, and D142. T205 and T217 each carry phosphothreonine. Residues 250 to 272 (AEDVKWEDSETGDPKGPGKIKSY) form a disordered region. Position 258 is a phosphoserine (S258).

It belongs to the RNase HII family. Eukaryotic subfamily. In terms of assembly, the RNase H2 complex is a heterotrimer composed of the catalytic subunit RNASEH2A and the non-catalytic subunits RNASEH2B and RNASEH2C. Mn(2+) is required as a cofactor. The cofactor is Mg(2+).

It localises to the nucleus. It catalyses the reaction Endonucleolytic cleavage to 5'-phosphomonoester.. Functionally, catalytic subunit of RNase HII, an endonuclease that specifically degrades the RNA of RNA:DNA hybrids. Participates in DNA replication, possibly by mediating the removal of lagging-strand Okazaki fragment RNA primers during DNA replication. Mediates the excision of single ribonucleotides from DNA:RNA duplexes. The sequence is that of Ribonuclease H2 subunit A (RNASEH2A) from Bos taurus (Bovine).